The following is a 662-amino-acid chain: Carboxysome assembly protein CsoS2 (662 aa).

Residues 1–227 (MSTSNAQSGR…KRRNAKEAPQ (227 aa)) form an N-terminal domain region. Disordered regions lie at residues 1–258 (MSTS…SESG), 277–322 (NCDV…TCSA), and 342–419 (PAKS…RGSC). One copy of the N-repeat 1 repeat lies at 8–27 (SGRAAAIARRNAQVKGKGYT). Low complexity-rich tracts occupy residues 28 to 57 (ASAA…SQPS) and 64 to 76 (SVAP…ASAA). The N-repeat 2 repeat unit spans residues 58 to 72 (RSRRKVSVAPTATPA). Residues 120–135 (RQAKAEKPTKRSERRT) show a composition bias toward basic and acidic residues. The span at 141–150 (VASQQPSGRL) shows a compositional bias: polar residues. An N-repeat 3 repeat occupies 147–168 (SGRLQSKAYRKAQAKGKAGQEA). Composition is skewed to low complexity over residues 161–170 (KGKAGQEAFK), 237–247 (GQSVSGTQVGQ), and 289–300 (VTQTQTTRGQVV). 5 M-repeat repeats span residues 228–278 (KVGE…SKNC), 288–338 (KVTQ…KMYC), 388–436 (KVMP…AKAC), 446–491 (KVTA…TEQF), and 496–550 (VDEQ…AMVC). The interval 228 to 559 (KVGESQTLHG…CDSTNAAAPG (332 aa)) is middle region. The span at 391-404 (PSQTAKGNTTTGSQ) shows a compositional bias: polar residues. Residues 560-631 (ESDFPAMIGQ…SPMGASQYRP (72 aa)) are C-terminal domain. Residues 564 to 572 (PAMIGQAQP) form a C-repeat 1 repeat. Disordered regions lie at residues 588–607 (KITG…DGPW) and 619–662 (AGQS…GARA). Residues 632-662 (VNNEVPMSPITGSSGNTDTGAKVTLSGGARA) form a C-terminal peptide region. Polar residues predominate over residues 641 to 650 (ITGSSGNTDT).

Belongs to the CsoS2 family. As to quaternary structure, interacts via its N-terminal repeats with RuBisCO. Interacts with the major shell protein CsoS1. Unlike H.neapolitanus and predictions for P.marinus strain MIT 9313, this protein is not thought to have ribosomal frameshifting.

The protein resides in the carboxysome. Functionally, required for alpha-carboxysome (Cb) assembly, mediates interaction between RuBisCO and the Cb shell. The protein is probably intrinsically disordered. The C-terminal repeats act as the encapsulation signal to target proteins to the Cb; they are necessary and sufficient to target both CsoS2 and foreign proteins to the Cb. The N-terminal repeats of this protein bind simultaneously to both subunits of RuBisCO. Probably also interacts with the major shell proteins (CsoS1); that interaction would increase the local concentration of CsoS2 so that it can condense RuBisCO and full carboxysomes can be formed. The sequence is that of Carboxysome assembly protein CsoS2 from Hydrogenovibrio crunogenus (strain DSM 25203 / XCL-2) (Thiomicrospira crunogena).